We begin with the raw amino-acid sequence, 208 residues long: GATA transcription factor 29 (208 aa).

The segment at 155-208 adopts a GATA-type; atypical zinc-finger fold; the sequence is GMKKCTNMNCNALNTPMWRRGPLGPKSLCNACGIKFRKEEERKAKRNVVIVLDD.

It belongs to the type IV zinc-finger family. Class B subfamily.

The protein resides in the nucleus. Functionally, transcriptional regulator that specifically binds 5'-GATA-3' or 5'-GAT-3' motifs within gene promoters. The sequence is that of GATA transcription factor 29 (GATA29) from Arabidopsis thaliana (Mouse-ear cress).